The primary structure comprises 123 residues: uncharacterized protein (123 aa).

Positions Val-36 to Ala-76 form a coiled coil.

This is an uncharacterized protein from Aquifex aeolicus (strain VF5).